Reading from the N-terminus, the 552-residue chain is Dihydroxy-acid dehydratase (552 aa).

D78 serves as a coordination point for Mg(2+). C119 is a [2Fe-2S] cluster binding site. Mg(2+)-binding residues include D120 and K121. N6-carboxylysine is present on K121. C191 lines the [2Fe-2S] cluster pocket. E442 contributes to the Mg(2+) binding site. S468 (proton acceptor) is an active-site residue.

Belongs to the IlvD/Edd family. In terms of assembly, homodimer. [2Fe-2S] cluster is required as a cofactor. Requires Mg(2+) as cofactor.

The enzyme catalyses (2R)-2,3-dihydroxy-3-methylbutanoate = 3-methyl-2-oxobutanoate + H2O. The catalysed reaction is (2R,3R)-2,3-dihydroxy-3-methylpentanoate = (S)-3-methyl-2-oxopentanoate + H2O. It participates in amino-acid biosynthesis; L-isoleucine biosynthesis; L-isoleucine from 2-oxobutanoate: step 3/4. The protein operates within amino-acid biosynthesis; L-valine biosynthesis; L-valine from pyruvate: step 3/4. In terms of biological role, functions in the biosynthesis of branched-chain amino acids. Catalyzes the dehydration of (2R,3R)-2,3-dihydroxy-3-methylpentanoate (2,3-dihydroxy-3-methylvalerate) into 2-oxo-3-methylpentanoate (2-oxo-3-methylvalerate) and of (2R)-2,3-dihydroxy-3-methylbutanoate (2,3-dihydroxyisovalerate) into 2-oxo-3-methylbutanoate (2-oxoisovalerate), the penultimate precursor to L-isoleucine and L-valine, respectively. The polypeptide is Dihydroxy-acid dehydratase (Moorella thermoacetica (strain ATCC 39073 / JCM 9320)).